The sequence spans 148 residues: NADPH-dependent 7-cyano-7-deazaguanine reductase (148 aa).

Catalysis depends on C50, which acts as the Thioimide intermediate. D57 acts as the Proton donor in catalysis. Residues 72 to 74 (VES) and 91 to 92 (HE) each bind substrate.

This sequence belongs to the GTP cyclohydrolase I family. QueF type 1 subfamily.

It localises to the cytoplasm. It carries out the reaction 7-aminomethyl-7-carbaguanine + 2 NADP(+) = 7-cyano-7-deazaguanine + 2 NADPH + 3 H(+). It participates in tRNA modification; tRNA-queuosine biosynthesis. Functionally, catalyzes the NADPH-dependent reduction of 7-cyano-7-deazaguanine (preQ0) to 7-aminomethyl-7-deazaguanine (preQ1). The polypeptide is NADPH-dependent 7-cyano-7-deazaguanine reductase (Helicobacter pylori (strain P12)).